Reading from the N-terminus, the 424-residue chain is Riboflavin biosynthesis protein RibBA (424 aa).

The DHBP synthase stretch occupies residues M1–T206. D-ribulose 5-phosphate contacts are provided by residues R32–E33, D37, R145–T149, and E169. Mg(2+) is bound at residue E33. H148 serves as a coordination point for Mg(2+). Positions Y207–R424 are GTP cyclohydrolase II. R257–E261 contacts GTP. Zn(2+) contacts are provided by C262, C273, and C275. Residues Q278, E301–R303, and T323 each bind GTP. The Proton acceptor; for GTP cyclohydrolase activity role is filled by D335. R337 functions as the Nucleophile; for GTP cyclohydrolase activity in the catalytic mechanism. T358 and K363 together coordinate GTP.

This sequence in the N-terminal section; belongs to the DHBP synthase family. The protein in the C-terminal section; belongs to the GTP cyclohydrolase II family. Requires Mg(2+) as cofactor. It depends on Mn(2+) as a cofactor. Zn(2+) serves as cofactor.

It carries out the reaction D-ribulose 5-phosphate = (2S)-2-hydroxy-3-oxobutyl phosphate + formate + H(+). The catalysed reaction is GTP + 4 H2O = 2,5-diamino-6-hydroxy-4-(5-phosphoribosylamino)-pyrimidine + formate + 2 phosphate + 3 H(+). It participates in cofactor biosynthesis; riboflavin biosynthesis; 2-hydroxy-3-oxobutyl phosphate from D-ribulose 5-phosphate: step 1/1. It functions in the pathway cofactor biosynthesis; riboflavin biosynthesis; 5-amino-6-(D-ribitylamino)uracil from GTP: step 1/4. Functionally, catalyzes the conversion of D-ribulose 5-phosphate to formate and 3,4-dihydroxy-2-butanone 4-phosphate. Its function is as follows. Catalyzes the conversion of GTP to 2,5-diamino-6-ribosylamino-4(3H)-pyrimidinone 5'-phosphate (DARP), formate and pyrophosphate. The polypeptide is Riboflavin biosynthesis protein RibBA (Chlamydia trachomatis serovar D (strain ATCC VR-885 / DSM 19411 / UW-3/Cx)).